A 269-amino-acid polypeptide reads, in one-letter code: 4-hydroxy-tetrahydrodipicolinate reductase (269 aa).

11-16 (GPIGRM) lines the NAD(+) pocket. Lysine 39 lines the NADP(+) pocket. NAD(+) contacts are provided by residues 101–103 (GTT) and 125–128 (ASNF). Histidine 158 serves as the catalytic Proton donor/acceptor. Histidine 159 lines the (S)-2,3,4,5-tetrahydrodipicolinate pocket. Residue lysine 162 is the Proton donor of the active site. 168–169 (GT) is a binding site for (S)-2,3,4,5-tetrahydrodipicolinate.

Belongs to the DapB family. As to quaternary structure, homotetramer.

It is found in the cytoplasm. It carries out the reaction (S)-2,3,4,5-tetrahydrodipicolinate + NAD(+) + H2O = (2S,4S)-4-hydroxy-2,3,4,5-tetrahydrodipicolinate + NADH + H(+). The catalysed reaction is (S)-2,3,4,5-tetrahydrodipicolinate + NADP(+) + H2O = (2S,4S)-4-hydroxy-2,3,4,5-tetrahydrodipicolinate + NADPH + H(+). It functions in the pathway amino-acid biosynthesis; L-lysine biosynthesis via DAP pathway; (S)-tetrahydrodipicolinate from L-aspartate: step 4/4. Functionally, catalyzes the conversion of 4-hydroxy-tetrahydrodipicolinate (HTPA) to tetrahydrodipicolinate. This is 4-hydroxy-tetrahydrodipicolinate reductase from Buchnera aphidicola subsp. Acyrthosiphon pisum (strain Tuc7).